The following is a 562-amino-acid chain: DNA ligase (562 aa).

ATP is bound at residue E250. K252 (N6-AMP-lysine intermediate) is an active-site residue. R257, R272, E302, F342, R417, and K423 together coordinate ATP.

It belongs to the ATP-dependent DNA ligase family. Mg(2+) serves as cofactor. The cofactor is Zn(2+).

It catalyses the reaction ATP + (deoxyribonucleotide)n-3'-hydroxyl + 5'-phospho-(deoxyribonucleotide)m = (deoxyribonucleotide)n+m + AMP + diphosphate.. The enzyme catalyses NAD(+) + (deoxyribonucleotide)n-3'-hydroxyl + 5'-phospho-(deoxyribonucleotide)m = (deoxyribonucleotide)n+m + AMP + beta-nicotinamide D-nucleotide.. In terms of biological role, DNA ligase that seals nicks in double-stranded DNA during DNA replication, DNA recombination and DNA repair. Can use both ATP and NAD(+), but NAD(+) may be a preferred nucleotide cofactor. The sequence is that of DNA ligase from Thermococcus onnurineus (strain NA1).